The sequence spans 719 residues: Capsid protein (719 aa).

A disordered region spans residues 647-678; it reads GDALPSRERKRQAWQDSTSEETESEAEAQEEK. The segment covering 664-674 has biased composition (acidic residues); the sequence is TSEETESEAEA.

Belongs to the anelloviridae capsid protein family.

It localises to the virion. In terms of biological role, self assemble to form an icosahedral capsid. The chain is Capsid protein from Torque teno virus (isolate Human/Germany/KAV/2001) (TTV).